Consider the following 229-residue polypeptide: Probable transmembrane reductase CYB561D1 (229 aa).

Topologically, residues 1–24 are cytoplasmic; that stretch reads MHSMEVGLVPAPAREPRLTRWLRR. Residues 22-224 enclose the Cytochrome b561 domain; the sequence is LRRGSGILAH…HQISSSYLPR (203 aa). Residues 25–45 traverse the membrane as a helical segment; the sequence is GSGILAHLIALGFTIFLTVLS. The Lumenal portion of the chain corresponds to 46-53; sequence RPGTSLFS. Residues 54–74 traverse the membrane as a helical segment; it reads WHPVFMALAFCLCMAEAILLF. His55 lines the heme b pocket. Topologically, residues 75-91 are cytoplasmic; sequence SPEHSLFFFCSRKTRIR. The chain crosses the membrane as a helical span at residues 92 to 112; it reads LHWAGQTMAILCAVLGLGFII. Heme b contacts are provided by His93 and His127. The Lumenal portion of the chain corresponds to 113-128; sequence SSKIRSEMSHLVSWHS. The chain crosses the membrane as a helical span at residues 129-149; the sequence is WIGALTLLATGGQALCGLCLL. Residues 150–169 lie on the Cytoplasmic side of the membrane; that stretch reads CPRAARVSRVARLKLYHLTC. Residue His166 participates in heme b binding. A helical membrane pass occupies residues 170–190; the sequence is GLVVYLMATVTVLLGMYSVWF. Residues 191–193 lie on the Lumenal side of the membrane; sequence QAQ. The chain crosses the membrane as a helical span at residues 194–214; that stretch reads IKGTAWYLCLGLPLYPALVIM. At 215-229 the chain is on the cytoplasmic side; sequence HQISSSYLPRKKVEI.

It depends on heme b as a cofactor.

It localises to the membrane. It carries out the reaction monodehydro-L-ascorbate radical(out) + L-ascorbate(in) = monodehydro-L-ascorbate radical(in) + L-ascorbate(out). It catalyses the reaction Fe(3+)(out) + L-ascorbate(in) = monodehydro-L-ascorbate radical(in) + Fe(2+)(out) + H(+). Its function is as follows. Probable transmembrane reductase that may use ascorbate as an electron donor and transfer electrons across membranes to reduce monodehydro-L-ascorbate radical and iron cations Fe(3+) in another cellular compartment. In Mus musculus (Mouse), this protein is Probable transmembrane reductase CYB561D1.